The following is a 268-amino-acid chain: Probable ribosomal RNA small subunit methyltransferase A (268 aa).

Positions 23, 25, 50, 71, 95, and 110 each coordinate S-adenosyl-L-methionine.

It belongs to the class I-like SAM-binding methyltransferase superfamily. rRNA adenine N(6)-methyltransferase family. RsmA subfamily.

It localises to the cytoplasm. Specifically dimethylates two adjacent adenosines in the loop of a conserved hairpin near the 3'-end of 16S rRNA in the 30S particle. May play a critical role in biogenesis of 30S subunits. The polypeptide is Probable ribosomal RNA small subunit methyltransferase A (Pyrococcus horikoshii (strain ATCC 700860 / DSM 12428 / JCM 9974 / NBRC 100139 / OT-3)).